The following is a 160-amino-acid chain: Small ribosomal subunit protein uS7 (160 aa).

This sequence belongs to the universal ribosomal protein uS7 family. Part of the 30S ribosomal subunit. Contacts proteins S9 and S11.

Functionally, one of the primary rRNA binding proteins, it binds directly to 16S rRNA where it nucleates assembly of the head domain of the 30S subunit. Is located at the subunit interface close to the decoding center, probably blocks exit of the E-site tRNA. This Ehrlichia ruminantium (strain Gardel) protein is Small ribosomal subunit protein uS7.